A 568-amino-acid polypeptide reads, in one-letter code: Phosphoprotein (568 aa).

The tract at residues 1-24 (MDQDAFFFERDPEAEGEAPRKQES) is disordered. Residues 7–23 (FFERDPEAEGEAPRKQE) are compositionally biased toward basic and acidic residues. Positions 33-41 (DVVLSYKPT) are N0 binding. Residues 45–324 (EDRSWLHGII…ANEEETSNTS (280 aa)) are disordered. Over residues 58–105 (EENKPSCKADDNNKDRAISTPTQDHRSGEESGISRRTSESKTETHARL) the composition is skewed to basic and acidic residues. A compositionally biased stretch (polar residues) spans 107–121 (DQQSIHRASRRGTSP). Composition is skewed to basic and acidic residues over residues 132–144 (RNTR…PNER) and 151–167 (LTDE…KREE). The span at 190–208 (RTNNNGRSMETSSTHSTRI) shows a compositional bias: polar residues. Residues 239 to 253 (TRSERTQNSELHKST) show a composition bias toward basic and acidic residues. Positions 294-305 (YTMNNANNNTKS) are enriched in polar residues. Residues 344 to 411 (FELSRSASHV…SSRDLHKRFS (68 aa)) are multimerization. Residues 387 to 416 (EENRTLLKQIQEEINSSRDLHKRFSEYQKE) are a coiled coil. The interval 412 to 445 (EYQKEQNSLMMANLSTLHIITDRGGKTGDPSDTT) is l protein binding. Residues 434–455 (RGGKTGDPSDTTRSPSVFTKGK) are disordered. Residues 441–450 (PSDTTRSPSV) show a composition bias toward polar residues. The segment at 479 to 568 (DLIREDELRD…FEEDIDSLTN (90 aa)) is interaction with the nucleocapsid (N-RNA).

This sequence belongs to the respirovirus P protein family. Homotetramer. Interacts (via multimerization domain) with polymerase L; this interaction forms the polymerase complex. Interacts (via N-terminus) with N0; this interaction allows P to chaperon N0 before encapsidation and form the N-P complex. Interacts (via C-terminus) with N-RNA template; this interaction positions the polymerase on the template.

In terms of biological role, essential cofactor of the RNA polymerase L that plays a central role in the transcription and replication by forming the polymerase complex with RNA polymerase L and recruiting L to the genomic N-RNA template for RNA synthesis. Also plays a central role in the encapsidation of nascent RNA chains by forming the encapsidation complex with the nucleocapsid protein N (N-P complex). Acts as a chaperone for newly synthesized free N protein, so-called N0, allowing encapsidation of nascent RNA chains during replication. The nucleoprotein protein N prevents excessive phosphorylation of P, which leads to down-regulation of viral transcription/ replication. Participates, together with N, in the formation of viral factories (viroplasms), which are large inclusions in the host cytoplasm where replication takes place. Recruits host PI4KB and remodel the host endoplasmic reticulum membrane to form viral replication factories. The polypeptide is Phosphoprotein (P/C) (Human parainfluenza 1 virus (strain C39) (HPIV-1)).